A 596-amino-acid chain; its full sequence is Elongation factor 4 (596 aa).

In terms of domain architecture, tr-type G spans 2–184; sequence KHIRNFSIIA…VIVAQIPPPE (183 aa). GTP contacts are provided by residues 14–19 and 131–134; these read DHGKST and NKID.

This sequence belongs to the TRAFAC class translation factor GTPase superfamily. Classic translation factor GTPase family. LepA subfamily.

It localises to the cell inner membrane. The enzyme catalyses GTP + H2O = GDP + phosphate + H(+). Required for accurate and efficient protein synthesis under certain stress conditions. May act as a fidelity factor of the translation reaction, by catalyzing a one-codon backward translocation of tRNAs on improperly translocated ribosomes. Back-translocation proceeds from a post-translocation (POST) complex to a pre-translocation (PRE) complex, thus giving elongation factor G a second chance to translocate the tRNAs correctly. Binds to ribosomes in a GTP-dependent manner. The sequence is that of Elongation factor 4 from Shewanella woodyi (strain ATCC 51908 / MS32).